The following is a 117-amino-acid chain: Probable prefoldin subunit 1 (117 aa).

The protein belongs to the prefoldin subunit beta family. As to quaternary structure, heterohexamer of two PFD-alpha type and four PFD-beta type subunits. Expressed in the distal cell tip of developing embryos.

Its subcellular location is the cytoplasm. In terms of biological role, binds specifically to cytosolic chaperonin (c-CPN) and transfers target proteins to it. Binds to nascent polypeptide chain and promotes folding in an environment in which there are many competing pathways for nonnative proteins. Has a role in gonadogenesis. In Caenorhabditis elegans, this protein is Probable prefoldin subunit 1 (pfd-1).